The following is a 246-amino-acid chain: tRNA (guanine-N(1)-)-methyltransferase (246 aa).

S-adenosyl-L-methionine is bound by residues glycine 114 and 134–139 (IGDYIL).

It belongs to the RNA methyltransferase TrmD family. In terms of assembly, homodimer.

The protein localises to the cytoplasm. The enzyme catalyses guanosine(37) in tRNA + S-adenosyl-L-methionine = N(1)-methylguanosine(37) in tRNA + S-adenosyl-L-homocysteine + H(+). In terms of biological role, specifically methylates guanosine-37 in various tRNAs. In Coxiella burnetii (strain RSA 331 / Henzerling II), this protein is tRNA (guanine-N(1)-)-methyltransferase.